The following is a 426-amino-acid chain: Protein arginine N-methyltransferase 2 (426 aa).

2 disordered regions span residues 65 to 88 and 155 to 175; these read DEEEDVKSNGVQTNGDRQTHGQES and DEEMEEDGEQEQEQQDAAVAA. Polar residues predominate over residues 73–88; that stretch reads NGVQTNGDRQTHGQES. Residues 155 to 168 are compositionally biased toward acidic residues; the sequence is DEEMEEDGEQEQEQ. An RMT2 domain is found at 207–426; sequence PSVTSSRYLN…YRLPLCKYMD (220 aa). S-adenosyl-L-methionine contacts are provided by residues Tyr-214, Met-243, 263-268, 284-286, 311-312, and Asp-331; these read HGMGIV, EAH, and WQ.

This sequence belongs to the class I-like SAM-binding methyltransferase superfamily. RMT2 methyltransferase family. In terms of assembly, monomer.

It is found in the cytoplasm. It localises to the nucleus. Functionally, S-adenosyl-L-methionine-dependent protein-arginine N-methyltransferase that methylates the delta-nitrogen atom of arginine residues to form N5-methylarginine (type IV) in target proteins. Monomethylates ribosomal protein L12. The polypeptide is Protein arginine N-methyltransferase 2 (Emericella nidulans (strain FGSC A4 / ATCC 38163 / CBS 112.46 / NRRL 194 / M139) (Aspergillus nidulans)).